Here is a 149-residue protein sequence, read N- to C-terminus: Small ribosomal subunit protein uS15 (149 aa).

The span at 1 to 11 (MARMHSRDRGK) shows a compositional bias: basic and acidic residues. Residues 1-25 (MARMHSRDRGKSGSTRPPRVAPPSW) are disordered.

It belongs to the universal ribosomal protein uS15 family. As to quaternary structure, part of the 30S ribosomal subunit.

The protein is Small ribosomal subunit protein uS15 of Methanopyrus kandleri (strain AV19 / DSM 6324 / JCM 9639 / NBRC 100938).